The sequence spans 310 residues: Protoheme IX farnesyltransferase 2 (310 aa).

9 consecutive transmembrane segments (helical) span residues 25-45 (PGII…AAKG), 49-69 (LVLM…GCAI), 87-107 (RVTV…LALG), 120-139 (ALAL…VYSL), 145-165 (SVYG…VGYC), 176-196 (AILL…IAIF), 220-240 (LHIV…PLAG), 242-262 (TGIA…AMAL), and 277-297 (QVFG…ALDF).

Belongs to the UbiA prenyltransferase family. Protoheme IX farnesyltransferase subfamily.

The protein localises to the cell inner membrane. It carries out the reaction heme b + (2E,6E)-farnesyl diphosphate + H2O = Fe(II)-heme o + diphosphate. Its pathway is porphyrin-containing compound metabolism; heme O biosynthesis; heme O from protoheme: step 1/1. Functionally, converts heme B (protoheme IX) to heme O by substitution of the vinyl group on carbon 2 of heme B porphyrin ring with a hydroxyethyl farnesyl side group. This Shewanella baltica (strain OS185) protein is Protoheme IX farnesyltransferase 2.